The primary structure comprises 244 residues: tRNA pseudouridine synthase A (244 aa).

Catalysis depends on Asp52, which acts as the Nucleophile. Tyr110 serves as a coordination point for substrate.

Belongs to the tRNA pseudouridine synthase TruA family. As to quaternary structure, homodimer.

It catalyses the reaction uridine(38/39/40) in tRNA = pseudouridine(38/39/40) in tRNA. Functionally, formation of pseudouridine at positions 38, 39 and 40 in the anticodon stem and loop of transfer RNAs. This Geotalea daltonii (strain DSM 22248 / JCM 15807 / FRC-32) (Geobacter daltonii) protein is tRNA pseudouridine synthase A.